Reading from the N-terminus, the 665-residue chain is Transketolase 1 (665 aa).

H26 contributes to the substrate binding site. Thiamine diphosphate-binding positions include H66 and 114-116 (GPL). D155 is a Mg(2+) binding site. Thiamine diphosphate-binding residues include G156 and N185. Residues N185 and I187 each coordinate Mg(2+). Substrate is bound by residues H261, R358, and S385. H261 is a binding site for thiamine diphosphate. E412 acts as the Proton donor in catalysis. F438 contributes to the thiamine diphosphate binding site. Residues H462, D470, and R521 each contribute to the substrate site.

It belongs to the transketolase family. As to quaternary structure, homodimer. It depends on Mg(2+) as a cofactor. Requires Ca(2+) as cofactor. The cofactor is Mn(2+). Co(2+) is required as a cofactor. Thiamine diphosphate serves as cofactor.

It catalyses the reaction D-sedoheptulose 7-phosphate + D-glyceraldehyde 3-phosphate = aldehydo-D-ribose 5-phosphate + D-xylulose 5-phosphate. Catalyzes the transfer of a two-carbon ketol group from a ketose donor to an aldose acceptor, via a covalent intermediate with the cofactor thiamine pyrophosphate. In Vibrio cholerae serotype O1 (strain ATCC 39315 / El Tor Inaba N16961), this protein is Transketolase 1 (tkt1).